The following is a 312-amino-acid chain: Ribonuclease Z (312 aa).

Zn(2+) contacts are provided by histidine 61, histidine 63, aspartate 65, histidine 66, histidine 148, aspartate 216, and histidine 275. The Proton acceptor role is filled by aspartate 65.

It belongs to the RNase Z family. In terms of assembly, homodimer. The cofactor is Zn(2+).

The enzyme catalyses Endonucleolytic cleavage of RNA, removing extra 3' nucleotides from tRNA precursor, generating 3' termini of tRNAs. A 3'-hydroxy group is left at the tRNA terminus and a 5'-phosphoryl group is left at the trailer molecule.. Functionally, zinc phosphodiesterase, which displays some tRNA 3'-processing endonuclease activity. Probably involved in tRNA maturation, by removing a 3'-trailer from precursor tRNA. This chain is Ribonuclease Z, found in Clostridium tetani (strain Massachusetts / E88).